Here is a 422-residue protein sequence, read N- to C-terminus: MWEGLWIATAVIAALVVIAALTLGLVLYRRRRISLSPRPERGVVDRSGGYTASSGITFSQTPTTQPAERIDTSGLPAVGDDATVPRDAPKRTIADVHLPEFEPEPQAPEVPEADAIAPPEGRLERLRGRLARSQNALGRGLLGLIGGGDLDEDSWQDVEDTLLVADLGPAATASVVSQLRSRLASGNVRTEADARAVLRDVLINELQPGMDRSIRALPHAGHPSVLLVVGVNGTGKTTTVGKLARVLVADGRRVVLGAADTFRAAAADQLQTWAARVGAAVVRGPEGADPASVAFDAVDKGIAAGADVVLIDTAGRLHTKVGLMDELDKVKRVVTRRASVDEVLLVLDATIGQNGLAQARVFAEVVDISGAVLTKLDGTAKGGIVFRVQQELGVPVKLVGLGEGPDDLAPFEPAAFVDALLG.

The interval 39-86 is disordered; the sequence is PERGVVDRSGGYTASSGITFSQTPTTQPAERIDTSGLPAVGDDATVPR. Residues 50–66 show a composition bias toward polar residues; that stretch reads YTASSGITFSQTPTTQP. Residues 230 to 237, 312 to 316, and 374 to 377 contribute to the GTP site; these read GVNGTGKT, DTAGR, and TKLD.

This sequence belongs to the GTP-binding SRP family. FtsY subfamily. As to quaternary structure, part of the signal recognition particle protein translocation system, which is composed of SRP and FtsY.

It localises to the cell membrane. The protein localises to the cytoplasm. The catalysed reaction is GTP + H2O = GDP + phosphate + H(+). In terms of biological role, involved in targeting and insertion of nascent membrane proteins into the cytoplasmic membrane. Acts as a receptor for the complex formed by the signal recognition particle (SRP) and the ribosome-nascent chain (RNC). The chain is Signal recognition particle receptor FtsY from Mycobacterium bovis (strain ATCC BAA-935 / AF2122/97).